The sequence spans 337 residues: Cytidine deaminase 2 (337 aa).

2 consecutive CMP/dCMP-type deaminase domains span residues 43-164 and 199-320; these read TDPI…FSSL and LDCS…LKYL. Residue 84-86 coordinates substrate; it reads NVD. H97 serves as a coordination point for Zn(2+). The active-site Proton donor is E99. Zn(2+) is bound by residues C132 and C135.

It belongs to the cytidine and deoxycytidylate deaminase family. In terms of assembly, homodimer. Zn(2+) is required as a cofactor.

The catalysed reaction is cytidine + H2O + H(+) = uridine + NH4(+). The enzyme catalyses 2'-deoxycytidine + H2O + H(+) = 2'-deoxyuridine + NH4(+). In terms of biological role, this enzyme scavenges exogenous and endogenous cytidine and 2'-deoxycytidine for UMP synthesis. This is Cytidine deaminase 2 (CDA2) from Arabidopsis thaliana (Mouse-ear cress).